The primary structure comprises 130 residues: Small ribosomal subunit protein uS8 (130 aa).

Belongs to the universal ribosomal protein uS8 family. In terms of assembly, part of the 30S ribosomal subunit.

Its function is as follows. One of the primary rRNA binding proteins, it binds directly to 16S rRNA central domain where it helps coordinate assembly of the platform of the 30S subunit. This is Small ribosomal subunit protein uS8 from Haloquadratum walsbyi (strain DSM 16790 / HBSQ001).